Reading from the N-terminus, the 84-residue chain is MDISRAEQRILHHLAQGGRIEIKREGKTIAEIRCFTRDGWVYPGVDLELFRKLKRKRAIRSSSGRPYRITERGLYLVRSELDNR.

It belongs to the UPF0386 family.

In Sinorhizobium fredii (strain NBRC 101917 / NGR234), this protein is UPF0386 protein NGR_c10980.